A 242-amino-acid chain; its full sequence is Uridylate kinase (242 aa).

Position 17-20 (17-20 (KLSG)) interacts with ATP. G59 serves as a coordination point for UMP. ATP contacts are provided by G60 and R64. UMP is bound by residues D79 and 140 to 147 (LGNPFFTT). 3 residues coordinate ATP: T167, Y173, and D176.

Belongs to the UMP kinase family. As to quaternary structure, homohexamer.

The protein resides in the cytoplasm. It catalyses the reaction UMP + ATP = UDP + ADP. It functions in the pathway pyrimidine metabolism; CTP biosynthesis via de novo pathway; UDP from UMP (UMPK route): step 1/1. Inhibited by UTP. Catalyzes the reversible phosphorylation of UMP to UDP. This is Uridylate kinase from Buchnera aphidicola subsp. Baizongia pistaciae (strain Bp).